The primary structure comprises 163 residues: Protein VASCULATURE COMPLEXITY AND CONNECTIVITY (163 aa).

The signal sequence occupies residues 1 to 27 (MTKIGGILVCLVIVGLDVAAAILGIQA). 3 consecutive transmembrane segments (helical) span residues 54–74 (LGLG…LVGG), 95–115 (MACL…IVIG), and 133–153 (FLSI…AYYV).

Belongs to the DESIGUAL family. Interacts with OPS. As to expression, expressed in vascular cells, mostly in hypocotyls, and, to a lower extent, in seedlings, roots, flowers, siliques, developing leaves and inflorescences, but barely in mature leaves and seeds. High levels in leaf primordia.

The protein resides in the endoplasmic reticulum membrane. Required, together with OPS, for embryo provasculature development and cotyledon vascular complexity and connectivity. Necessary, partially redundantly with DEAL2 and DEAL3, to ensure bilateral symmetry development and early leaf margin patterning, probably via the regulation of auxin and CUC2 distribution. Regulates cell proliferation but not cell expansion. This is Protein VASCULATURE COMPLEXITY AND CONNECTIVITY from Arabidopsis thaliana (Mouse-ear cress).